The chain runs to 619 residues: MLGGSSVDGERDTDDDAAGAVAAPPAIDFPAEVSDPKYDESDVPAELQVLKEPLQQPTFPFLVANQLLLVSLLEHLSHVHEPNPLHSKQVFKLLCQTFIKMGLLSSFTCSDEFSSLRLHHNRAITHLMRSAKERVRQDPCQDNSYMQKIRSREIAFEAQTSRYLNEFEELAILGKGGYGRVYKVRNKLDGQHYAIKKILIKSATKTDCMKVLREVKVLAGLQHPNIVGYHTAWIEHVHVVQPQDRVPIQLPSLEVLSEQEGDRDQGGVKDNESSSSIVFAELTPEKEKPFGESEVKNENNNLVSYTANLVVRNSSESESSIELQEDGLTDLSVRPVVRHQLPLGHSSELEGNFTSTDESSEGNLNLLGQTEVRYHLMLHIQMQLCELSLWDWITERNKRSREYVDEAACPYVMASVATKIFQELVEGVFYIHNMGIVHRDLKPRNIFLHGPDQQVKIGDFGLACADIIQNADWTNRNGKGTRTHTSRVGTCLYASPEQLEGSQYDAKSDMYSLGVILLELFQPFGTEMERATVLTGVRTGRIPESLSKRCPVQAKYIQLLTGRNVSQRPSALQLLQSELFQTTGNVNLTLQMKIIEQEKEIEELKKQLSLLSQDRGLKR.

Positions 1 to 40 (MLGGSSVDGERDTDDDAAGAVAAPPAIDFPAEVSDPKYDE) are disordered. A compositionally biased stretch (low complexity) spans 18–28 (AGAVAAPPAID). Positions 85–104 (LHSKQVFKLLCQTFIKMGLL) match the SIFI-degron motif. The 414-residue stretch at 167–580 (FEELAILGKG…ALQLLQSELF (414 aa)) folds into the Protein kinase domain. ATP-binding positions include 173 to 181 (LGKGGYGRV) and Lys196. Thr283 carries the post-translational modification Phosphothreonine. Residues 408 to 413 (ACPYVM) form an HRM 1 repeat. Catalysis depends on Asp440, which acts as the Proton acceptor. 3 positions are modified to phosphothreonine; by autocatalysis: Thr483, Thr485, and Thr490. The HRM 2 repeat unit spans residues 549 to 554 (RCPVQA).

This sequence belongs to the protein kinase superfamily. Ser/Thr protein kinase family. GCN2 subfamily. In terms of assembly, synthesized in an inactive form that binds to the N-terminal domain of CDC37. Has to be associated with a multiprotein complex containing Hsp90, CDC37 and PPP5C for maturation and activation by autophosphorylation. The phosphatase PPP5C modulates this activation. Homodimer; homodimerizes in presence of heme, forming a disulfide-linked inactive homodimer. Interacts with DELE1; binds both to full-length DELE1 and processed form of DELE1 (S-DELE1) in response to stress, leading to activate its protein kinase activity and trigger the integrated stress response (ISR). In terms of processing, activated by autophosphorylation; phosphorylated predominantly on serine and threonine residues, but also on tyrosine residues. Autophosphorylation at Thr-485 is required for kinase activation. The active autophosphorylated form apparently is largely refractory to cellular heme fluctuations. Post-translationally, ubiquitinated and degraded by the SIFI complex once the mitochondrial stress has been resolved, thereby providing stress response silencing. Within the SIFI complex, UBR4 initiates ubiquitin chain that are further elongated or branched by KCMF1. Expressed predominantly in erythroid cells, mature reticulocytes, as well as fetal liver nucleated erythroid cells. At much lower levels, expressed in hepatocytes and bone marrow-derived macrophages (at protein level).

The protein resides in the cytoplasm. It catalyses the reaction L-seryl-[protein] + ATP = O-phospho-L-seryl-[protein] + ADP + H(+). The enzyme catalyses L-threonyl-[protein] + ATP = O-phospho-L-threonyl-[protein] + ADP + H(+). With respect to regulation, in normal conditions, the protein kinase activity is inhibited; inhibition is relieved by various stress conditions. Inhibited by heme: in presence of heme, forms a disulfide-linked inactive homodimer. Heme depletion relieves inhibition and stimulates kinase activity by autophosphorylation. Inhibited by the heme metabolites biliverdin and bilirubin. Induced by oxidative stress generated by arsenite treatment. Binding of nitric oxide (NO) to the heme iron in the N-terminal heme-binding domain activates the kinase activity, while binding of carbon monoxide (CO) suppresses kinase activity. Protein kinase activity is also activated upon binding to DELE1 in response to various stress, triggering the integrated stress response (ISR): activated by full-length DELE1 in response to iron deficiency, while it is activated by the processed form of DELE1 (S-DELE1) in response to mitochondrial stress. In terms of biological role, metabolic-stress sensing protein kinase that phosphorylates the alpha subunit of eukaryotic translation initiation factor 2 (EIF2S1/eIF-2-alpha) in response to various stress conditions. Key activator of the integrated stress response (ISR) required for adaptation to various stress, such as heme deficiency, oxidative stress, osmotic shock, mitochondrial dysfunction and heat shock. EIF2S1/eIF-2-alpha phosphorylation in response to stress converts EIF2S1/eIF-2-alpha in a global protein synthesis inhibitor, leading to a global attenuation of cap-dependent translation, while concomitantly initiating the preferential translation of ISR-specific mRNAs, such as the transcriptional activator ATF4, and hence allowing ATF4-mediated reprogramming. Acts as a key sensor of heme-deficiency: in normal conditions, binds hemin via a cysteine thiolate and histidine nitrogenous coordination, leading to inhibit the protein kinase activity. This binding occurs with moderate affinity, allowing it to sense the heme concentration within the cell: heme depletion relieves inhibition and stimulates kinase activity, activating the ISR. Thanks to this unique heme-sensing capacity, plays a crucial role to shut off protein synthesis during acute heme-deficient conditions. In red blood cells (RBCs), controls hemoglobin synthesis ensuring a coordinated regulation of the synthesis of its heme and globin moieties. It thereby plays an essential protective role for RBC survival in anemias of iron deficiency. Iron deficiency also triggers activation by full-length DELE1. Also activates the ISR in response to mitochondrial dysfunction: HRI/EIF2AK1 protein kinase activity is activated upon binding to the processed form of DELE1 (S-DELE1), thereby promoting the ATF4-mediated reprogramming. Also acts as an activator of mitophagy in response to mitochondrial damage: catalyzes phosphorylation of eIF-2-alpha (EIF2S1) following activation by S-DELE1, thereby promoting mitochondrial localization of EIF2S1, triggering PRKN-independent mitophagy. The sequence is that of Eukaryotic translation initiation factor 2-alpha kinase 1 from Mus musculus (Mouse).